Here is a 440-residue protein sequence, read N- to C-terminus: Xylose isomerase (440 aa).

Catalysis depends on residues histidine 101 and aspartate 104. 7 residues coordinate Mg(2+): glutamate 232, glutamate 268, histidine 271, aspartate 296, aspartate 307, aspartate 309, and aspartate 339.

This sequence belongs to the xylose isomerase family. Homotetramer. Mg(2+) serves as cofactor.

The protein resides in the cytoplasm. It carries out the reaction alpha-D-xylose = alpha-D-xylulofuranose. In Escherichia coli O157:H7, this protein is Xylose isomerase.